The following is a 539-amino-acid chain: Glycerophosphoinositol inositolphosphodiesterase GDPD2 (539 aa).

Topologically, residues 1–40 are cytoplasmic; that stretch reads MADSPGCCSIWARCLHCLYSCHWRKYPKQKMQTSKCDCIW. The chain crosses the membrane as a helical span at residues 41–61; the sequence is FGLLFLTFLLSLGWLYIGLIL. Residues 62-83 are Extracellular-facing; that stretch reads LNDLHNFNEFLFRHWGHWMDWS. The helical transmembrane segment at 84–104 threads the bilayer; the sequence is LIVLLVVSLLVTYASLLLLLG. The Cytoplasmic segment spans residues 105–121; sequence LLLQLCGQPLHLHSLHK. Residues 122-142 traverse the membrane as a helical segment; the sequence is VLLLLIVLLVAAGLVGLDIQW. Residues 143 to 154 are Extracellular-facing; the sequence is RQEWHSLRLSLQ. Residues 155–175 traverse the membrane as a helical segment; it reads ATAPFLHIGAVAGITLLAWPV. The Cytoplasmic portion of the chain corresponds to 176–189; the sequence is ADTFYRIHPRGPKV. A helical membrane pass occupies residues 190–210; the sequence is LLLLLFFGVTLVIYLMPLLFI. The Extracellular segment spans residues 211–491; it reads SSPCIMKLRD…PLWLLPPQKY (281 aa). Residues 225–480 enclose the GP-PDE domain; it reads PGLVGHRGAP…NACQLLQQMQ (256 aa). 3 residues coordinate a divalent metal cation: Glu257, Asp259, and His272. Asn333 carries an N-linked (GlcNAc...) asparagine glycan. Residues 492 to 512 traverse the membrane as a helical segment; it reads LMIWVITDCASILLLLSIFLL. Topologically, residues 513-539 are cytoplasmic; sequence RGGCAKRNRTGLETAVLLTKINNFASE.

It belongs to the glycerophosphoryl diester phosphodiesterase family. Requires Ca(2+) as cofactor. Detected in spleen, femur and calvaria.

The protein resides in the cell membrane. Its subcellular location is the cytoplasm. The protein localises to the cytoskeleton. It catalyses the reaction sn-glycero-3-phospho-1D-myo-inositol + H2O = 1D-myo-inositol 1-phosphate + glycerol + H(+). Its function is as follows. Has glycerophosphoinositol inositolphosphodiesterase activity and specifically hydrolyzes glycerophosphoinositol, with no activity for other substrates such as glycerophosphoinositol 4-phosphate, glycerophosphocholine, glycerophosphoethanolamine, and glycerophosphoserine. Accelerates the program of osteoblast differentiation and growth. May play a role in remodeling of the actin cytoskeleton. The chain is Glycerophosphoinositol inositolphosphodiesterase GDPD2 (Gdpd2) from Mus musculus (Mouse).